We begin with the raw amino-acid sequence, 38 residues long: Turripeptide GpIAa (38 aa).

The protein belongs to the turripeptide family. As to expression, expressed by the venom duct.

It localises to the secreted. The sequence is that of Turripeptide GpIAa from Cryptogemma periscelida (Atlantic gem-turris).